A 97-amino-acid chain; its full sequence is Large ribosomal subunit protein bL27 (97 aa).

Residues 1–23 (MAHKKGASSSRNGRDSTSKRLGV) form a disordered region.

It belongs to the bacterial ribosomal protein bL27 family.

The sequence is that of Large ribosomal subunit protein bL27 from Acidothermus cellulolyticus (strain ATCC 43068 / DSM 8971 / 11B).